Reading from the N-terminus, the 164-residue chain is Protein-export protein SecB (164 aa).

A compositionally biased stretch (basic and acidic residues) spans 1 to 12 (MPDKDEITHDAQ). The disordered stretch occupies residues 1–22 (MPDKDEITHDAQSENEESLPLA).

Belongs to the SecB family. As to quaternary structure, homotetramer, a dimer of dimers. One homotetramer interacts with 1 SecA dimer.

The protein resides in the cytoplasm. Its function is as follows. One of the proteins required for the normal export of preproteins out of the cell cytoplasm. It is a molecular chaperone that binds to a subset of precursor proteins, maintaining them in a translocation-competent state. It also specifically binds to its receptor SecA. The sequence is that of Protein-export protein SecB from Neorickettsia sennetsu (strain ATCC VR-367 / Miyayama) (Ehrlichia sennetsu).